An 844-amino-acid chain; its full sequence is MKCMVTNVLRSLIENDKGELRKLEKMADKVFSYADEMEALTDEQLQAKTAEFKERYNNGESLDDLLYEAYAVVREGARRVLGLYPYKVQVMGGIVLHNGDVPEMRTGEGKTLTATMPVYLNALSGQGVHVVTVNEYLSTRDATEMGELYSWLGLSVGINLAAKSPLEKREAYNCDITYSTNSEIGFDYLRDNMVVRAEDMVQRPLNYALVDEVDSILIDEARTPLIVSGAQGSETNQLYFLADNLVKSLTTEDYIIDIPSKTIGLSDSGIDKAEKFFKLDNLYDIENVAITHFLDNALRANYIMTYDIDYLVNEDQEVMIIDPFTGRTMEGRRYSDGLHQAIEAKEGVPVQNESKTSASITYQNLFRMYKKLSGMTGTGKTEEEEFREIYNIRVVPIPTNRPIARVDHEDLLYPSLEYKFNAVIADVKRRYEKGQPVLVGTVAVETSDLISQKLVAAGVPHEVLNAKNHYREAQIIMNAGQRGAVTIATNMAGRGTDIKLGPGVRELGGLCVIGTERHESRRIDNQLRGRSGRQGDPGESQFYLSLEDDLMKRFGSERIKVFMERMNLTEEESVIKSKMLTRQVESAQKRVEGNNYDSRKQVLQYDDVMREQREIIYRQRQDVITADRDLAPEIKAMMKRTIERQVAGHFLGSKDEAIDGIIKFAHANLVEDDTLSKATFEAMNQKEIVEELYERALRVYDSQVKKLRDEERVREFQKVLILRVVDNKWTDHIDALDQLRNAVSLRGYAQNNPIVEYQSEAFTMFNDMIGAIEFEVTRLMMKAQIHDNIERERTSQEAHTTAVKNIMPNQSHAIQENVSFEGVDRNDPCPCQSGKKFKNCHGRK.

ATP is bound by residues Q89, 107-111, and D497; that span reads GEGKT. 4 residues coordinate Zn(2+): C829, C831, C840, and H841.

Belongs to the SecA family. As to quaternary structure, monomer and homodimer. Part of the essential Sec protein translocation apparatus which comprises SecA, SecYEG and auxiliary proteins SecDF. Other proteins may also be involved. It depends on Zn(2+) as a cofactor.

It is found in the cell membrane. Its subcellular location is the cytoplasm. The catalysed reaction is ATP + H2O + cellular proteinSide 1 = ADP + phosphate + cellular proteinSide 2.. Its function is as follows. Part of the Sec protein translocase complex. Interacts with the SecYEG preprotein conducting channel. Has a central role in coupling the hydrolysis of ATP to the transfer of proteins into and across the cell membrane, serving as an ATP-driven molecular motor driving the stepwise translocation of polypeptide chains across the membrane. The protein is Protein translocase subunit SecA of Streptococcus suis (strain 98HAH33).